Consider the following 146-residue polypeptide: Hemoglobin subunit beta (146 aa).

Val-1 carries the N-acetylvaline modification. The Globin domain occupies 2–146 (HLSSEEKGLI…VANALAHKYH (145 aa)). At Thr-12 the chain carries Phosphothreonine. Position 59 is an N6-acetyllysine (Lys-59). His-63 lines the heme b pocket. Lys-82 is subject to N6-acetyllysine. His-92 serves as a coordination point for heme b. Cys-93 is subject to S-nitrosocysteine. At Lys-144 the chain carries N6-acetyllysine.

The protein belongs to the globin family. As to quaternary structure, heterotetramer of two alpha chains and two beta chains. In terms of tissue distribution, red blood cells.

Involved in oxygen transport from the lung to the various peripheral tissues. The polypeptide is Hemoglobin subunit beta (HBB) (Potorous tridactylus (Potoroo)).